A 152-amino-acid polypeptide reads, in one-letter code: Anti-CBASS protein Acb1 (152 aa).

Tyr12 is a 3',3'-cGAMP binding site. Tyr12 lines the 3',3'-cUAMP pocket. Catalysis depends on residues His44, Thr46, His113, and Thr115. 3',3'-cGAMP is bound by residues Glu141 and Trp147. Residues Glu141 and Trp147 each coordinate 3',3'-cUAMP.

The protein belongs to the anti-CBASS protein Acb1 family.

The catalysed reaction is 3',3'-cUAMP + H2O = U[3'-5']pAp[3'] + H(+). It carries out the reaction 3',3',3'-c-tri-AMP + H2O = A[3'-5']pA[3'-5']pAp[3'] + H(+). The enzyme catalyses 3',3',3'-cAAG + H2O = G[3'-5']pA[3'-5']pAp[3'] + H(+). It catalyses the reaction 3',3',3'-cAAG + H2O = A[3'-5']pG[3'-5']pAp[3'] + H(+). The catalysed reaction is 3',3'-cGAMP + H2O = G[3'-5']pAp[3'] + H(+). Counteracts the host CBASS antiviral system. Phosphodiesterase that enables metal-independent hydrolysis of the host cyclic di- and trinucleotide CBASS signals such as 3'3'-cGAMP, 3'3'cUA, and 3'3'3'-cAAA. Does not cleave cGG or cA4. Besides evasion of the CBASS system, might also enable evasion of the type III CRISPR systems that use cA3 signals. The sequence is that of Anti-CBASS protein Acb1 (57B) from Escherichia coli (Bacteriophage T4).